The chain runs to 379 residues: Queuine tRNA-ribosyltransferase (379 aa).

Catalysis depends on Asp94, which acts as the Proton acceptor. Residues 94-98 (DSGGF), Asp148, Gln191, and Gly218 contribute to the substrate site. The tract at residues 249-255 (GVGSPDA) is RNA binding. Catalysis depends on Asp268, which acts as the Nucleophile. Residues 273 to 277 (TRIAR) are RNA binding; important for wobble base 34 recognition. Zn(2+) contacts are provided by Cys306, Cys308, Cys311, and His337.

The protein belongs to the queuine tRNA-ribosyltransferase family. As to quaternary structure, homodimer. Within each dimer, one monomer is responsible for RNA recognition and catalysis, while the other monomer binds to the replacement base PreQ1. The cofactor is Zn(2+).

The enzyme catalyses 7-aminomethyl-7-carbaguanine + guanosine(34) in tRNA = 7-aminomethyl-7-carbaguanosine(34) in tRNA + guanine. It functions in the pathway tRNA modification; tRNA-queuosine biosynthesis. Catalyzes the base-exchange of a guanine (G) residue with the queuine precursor 7-aminomethyl-7-deazaguanine (PreQ1) at position 34 (anticodon wobble position) in tRNAs with GU(N) anticodons (tRNA-Asp, -Asn, -His and -Tyr). Catalysis occurs through a double-displacement mechanism. The nucleophile active site attacks the C1' of nucleotide 34 to detach the guanine base from the RNA, forming a covalent enzyme-RNA intermediate. The proton acceptor active site deprotonates the incoming PreQ1, allowing a nucleophilic attack on the C1' of the ribose to form the product. After dissociation, two additional enzymatic reactions on the tRNA convert PreQ1 to queuine (Q), resulting in the hypermodified nucleoside queuosine (7-(((4,5-cis-dihydroxy-2-cyclopenten-1-yl)amino)methyl)-7-deazaguanosine). The protein is Queuine tRNA-ribosyltransferase of Oceanobacillus iheyensis (strain DSM 14371 / CIP 107618 / JCM 11309 / KCTC 3954 / HTE831).